Consider the following 64-residue polypeptide: Large ribosomal subunit protein bL35 (64 aa).

Residues 1–14 show a composition bias toward basic residues; it reads MKNKTHKGTAKRVK. Residues 1–30 form a disordered region; it reads MKNKTHKGTAKRVKVTGSGKLVREQANRRH. Residues 21-30 are compositionally biased toward basic and acidic residues; that stretch reads LVREQANRRH.

It belongs to the bacterial ribosomal protein bL35 family.

In Corynebacterium efficiens (strain DSM 44549 / YS-314 / AJ 12310 / JCM 11189 / NBRC 100395), this protein is Large ribosomal subunit protein bL35.